Reading from the N-terminus, the 1063-residue chain is Structural polyprotein (1063 aa).

Residues 1-131 form a disordered region; that stretch reads MASTTPITME…LGPPTNPFQA (131 aa). The tract at residues 30 to 69 is human C1QBP/SF2P32-binding; that stretch reads GASQSRRPRPPRQRDSSTSGDDSGRDSGGPRRRRGNRGRG. Ser46 carries the post-translational modification Phosphoserine; by host. Basic and acidic residues predominate over residues 70-87; it reads QLRDWSRAPPPPEERQES. Pro residues predominate over residues 93–107; the sequence is APKPSRAPPQQPQPP. A disulfide bridge connects residues Cys153 and Cys197. A functions as E2 signal peptide region spans residues 279-300; it reads GAPQAFLAGLLLAAVAVGTARA. At 301 to 534 the chain is on the extracellular side; sequence GLQPRADMAA…LWLATANALS (234 aa). N-linked (GlcNAc...) asparagine; by host glycans are attached at residues Asn353, Asn371, Asn410, and Asn429. The chain crosses the membrane as a helical span at residues 535–555; sequence LDHALAAFVLLVPWVLIFMVC. At 556 to 582 the chain is on the cytoplasmic side; sequence RRACRRRGAAAALTAVVLQGYNPPAYG. Residues 563–582 are functions as E1 signal peptide; the sequence is GAAAALTAVVLQGYNPPAYG. The Extracellular portion of the chain corresponds to 583–1028; sequence EEAFTYLCTA…QTWAEWAAAH (446 aa). Intrachain disulfides connect Cys590/Cys595, Cys619/Cys824, Cys641/Cys653, Cys699/Cys712, Cys758/Cys767, Cys807/Cys817, Cys931/Cys934, and Cys950/Cys983. N-linked (GlcNAc...) asparagine; by host glycosylation occurs at Asn658. The Ca(2+) site is built by Asn670 and Ala671. Asp718 and Thr719 together coordinate Ca(2+). N-linked (GlcNAc...) asparagine; by host glycans are attached at residues Asn759 and Asn791. 2 O-linked (GalNAc...) threonine; by host glycosylation sites follow: Thr1011 and Thr1012. A helical membrane pass occupies residues 1029–1049; that stretch reads WWQLTLGAICALLLAGLLACC. The Extracellular portion of the chain corresponds to 1050 to 1063; sequence AKCLYYLRGAIAPR.

Homodimer; further assembles into homooligomer. Interacts with human C1QBP. Interacts (via N-terminus) with protease/methyltransferase p150. As to quaternary structure, heterodimer with spike glycoprotein E2. In terms of assembly, heterodimer with spike glycoprotein E1. Post-translationally, structural polyprotein: Specific enzymatic cleavages in vivo yield mature proteins. Two signal peptidase-mediated cleavages within the polyprotein produce the structural proteins capsid, E2, and E1. The E2 signal peptide remains attached to the C-terminus of the capsid protein after cleavage by the signal peptidase. Another signal peptide at E2 C-terminus directs E1 to the ER, with a similar mechanism. Contains three N-linked oligosaccharides. In terms of processing, capsid is phosphorylated on Ser-46 by host. This phosphorylation negatively regulates capsid protein RNA-binding activity. Dephosphorylated by human PP1A.

The protein localises to the virion. Its subcellular location is the host cytoplasm. The protein resides in the host mitochondrion. It localises to the virion membrane. It is found in the host Golgi apparatus membrane. Capsid protein interacts with genomic RNA and assembles into icosahedric core particles 65-70 nm in diameter. The resulting nucleocapsid eventually associates with the cytoplasmic domain of E2 at the cell membrane, leading to budding and formation of mature virions from host Golgi membranes. Phosphorylation negatively regulates RNA-binding activity, possibly delaying virion assembly during the viral replication phase. Capsid protein dimerizes and becomes disulfide-linked in the virion. Modulates genomic RNA replication. Modulates subgenomic RNA synthesis by interacting with human C1QBP/SF2P32. Induces both perinuclear clustering of mitochondria and the formation of electron-dense intermitochondrial plaques, both hallmarks of rubella virus infected cells. Induces apoptosis when expressed in transfected cells. Its function is as follows. Responsible for viral attachment to target host cell, by binding to the cell receptor. Its transport to the plasma membrane depends on interaction with E1 protein. The surface glycoproteins display an irregular helical organization and a pseudo-tetrameric inner nucleocapsid arrangement. Functionally, class II viral fusion protein. Fusion activity is inactive as long as E1 is bound to E2 in mature virion. After virus attachment to target cell and clathrin-mediated endocytosis, acidification of the endosome would induce dissociation of E1/E2 heterodimer and concomitant trimerization of the E1 subunits. This E1 homotrimer is fusion active, and promotes release of viral nucleocapsid in cytoplasm after endosome and viral membrane fusion. The cytoplasmic tail of spike glycoprotein E1 modulates virus release. The surface glycoproteins display an irregular helical organization and a pseudo-tetrameric inner nucleocapsid arrangement. This Homo sapiens (Human) protein is Structural polyprotein.